The sequence spans 458 residues: GTPase Der (458 aa).

EngA-type G domains are found at residues 3–167 (PVVV…PETE) and 176–351 (IKLA…AQYT). Residues 9 to 16 (GRPNVGKS), 56 to 60 (DTGGF), 119 to 122 (NKID), 182 to 189 (GRPNVGKS), 229 to 233 (DTAGL), and 294 to 297 (NKWD) contribute to the GTP site. Positions 352-436 (FNIKTGELNN…PIRLFFREKP (85 aa)) constitute a KH-like domain.

Belongs to the TRAFAC class TrmE-Era-EngA-EngB-Septin-like GTPase superfamily. EngA (Der) GTPase family. As to quaternary structure, associates with the 50S ribosomal subunit.

In terms of biological role, GTPase that plays an essential role in the late steps of ribosome biogenesis. The protein is GTPase Der of Desulfosudis oleivorans (strain DSM 6200 / JCM 39069 / Hxd3) (Desulfococcus oleovorans).